Consider the following 388-residue polypeptide: Putative 8-amino-7-oxononanoate synthase (388 aa).

Position 23 (R23) interacts with substrate. 110-111 (GY) provides a ligand contact to pyridoxal 5'-phosphate. H135 contacts substrate. Pyridoxal 5'-phosphate-binding positions include S182, 207-210 (DDAH), and 238-241 (TLSK). K241 bears the N6-(pyridoxal phosphate)lysine mark. T355 is a substrate binding site.

This sequence belongs to the class-II pyridoxal-phosphate-dependent aminotransferase family. BioF subfamily. Homodimer. It depends on pyridoxal 5'-phosphate as a cofactor.

The catalysed reaction is 6-carboxyhexanoyl-[ACP] + L-alanine + H(+) = (8S)-8-amino-7-oxononanoate + holo-[ACP] + CO2. It participates in cofactor biosynthesis; biotin biosynthesis. In terms of biological role, catalyzes the decarboxylative condensation of pimeloyl-[acyl-carrier protein] and L-alanine to produce 8-amino-7-oxononanoate (AON), [acyl-carrier protein], and carbon dioxide. This Thermodesulfovibrio yellowstonii (strain ATCC 51303 / DSM 11347 / YP87) protein is Putative 8-amino-7-oxononanoate synthase (bioF).